Consider the following 354-residue polypeptide: Biotin synthase (354 aa).

Positions 40-258 (NEVQVSTLLS…IAVARILMPR (219 aa)) constitute a Radical SAM core domain. Positions 55, 59, and 62 each coordinate [4Fe-4S] cluster. The [2Fe-2S] cluster site is built by Cys99, Cys130, Cys190, and Arg262.

This sequence belongs to the radical SAM superfamily. Biotin synthase family. As to quaternary structure, homodimer. [4Fe-4S] cluster is required as a cofactor. Requires [2Fe-2S] cluster as cofactor.

It carries out the reaction (4R,5S)-dethiobiotin + (sulfur carrier)-SH + 2 reduced [2Fe-2S]-[ferredoxin] + 2 S-adenosyl-L-methionine = (sulfur carrier)-H + biotin + 2 5'-deoxyadenosine + 2 L-methionine + 2 oxidized [2Fe-2S]-[ferredoxin]. It functions in the pathway cofactor biosynthesis; biotin biosynthesis; biotin from 7,8-diaminononanoate: step 2/2. In terms of biological role, catalyzes the conversion of dethiobiotin (DTB) to biotin by the insertion of a sulfur atom into dethiobiotin via a radical-based mechanism. The protein is Biotin synthase of Hahella chejuensis (strain KCTC 2396).